Reading from the N-terminus, the 345-residue chain is NADPH dehydrogenase (345 aa).

An FMN-binding site is contributed by 23 to 26 (SPMC). Substrate is bound at residue Tyr28. Ala60 and Gln102 together coordinate FMN. Substrate is bound at residue 164–167 (HGAH). FMN is bound by residues Arg215 and 307 to 308 (GR).

It belongs to the NADH:flavin oxidoreductase/NADH oxidase family. NamA subfamily. Homotetramer. FMN serves as cofactor.

It catalyses the reaction A + NADPH + H(+) = AH2 + NADP(+). Its function is as follows. Catalyzes the reduction of the double bond of an array of alpha,beta-unsaturated aldehydes and ketones. It also reduces the nitro group of nitroester and nitroaromatic compounds. It could have a role in detoxification processes. The sequence is that of NADPH dehydrogenase from Bacillus anthracis (strain CDC 684 / NRRL 3495).